A 429-amino-acid chain; its full sequence is Na(+)/H(+) antiporter NhaA 1 (429 aa).

12 consecutive transmembrane segments (helical) span residues 32-52 (ISGG…NSPW), 73-93 (LSVQ…VAGL), 111-131 (VVPV…YSLL), 140-160 (GWAI…AVVG), 170-190 (FLLT…AVAY), 193-213 (ELSV…TLLV), 219-239 (AWWL…ASGV), 243-263 (VAGV…AGGP), 284-304 (VAVP…LGGL), 316-336 (VVVG…WLVA), 349-369 (WVDV…SLLI), and 383-403 (HVKV…TVVL).

This sequence belongs to the NhaA Na(+)/H(+) (TC 2.A.33) antiporter family.

The protein localises to the cell membrane. The catalysed reaction is Na(+)(in) + 2 H(+)(out) = Na(+)(out) + 2 H(+)(in). Na(+)/H(+) antiporter that extrudes sodium in exchange for external protons. The chain is Na(+)/H(+) antiporter NhaA 1 from Frankia alni (strain DSM 45986 / CECT 9034 / ACN14a).